A 348-amino-acid polypeptide reads, in one-letter code: Erythronate-4-phosphate dehydrogenase (348 aa).

Substrate is bound by residues Thr46 and Thr67. Residue Asp147 participates in NAD(+) binding. Arg209 is an active-site residue. Asp233 serves as a coordination point for NAD(+). The active site involves Glu238. His255 functions as the Proton donor in the catalytic mechanism. Residue Gly258 participates in NAD(+) binding. Tyr259 lines the substrate pocket.

Belongs to the D-isomer specific 2-hydroxyacid dehydrogenase family. PdxB subfamily. In terms of assembly, homodimer.

The protein resides in the cytoplasm. It carries out the reaction 4-phospho-D-erythronate + NAD(+) = (R)-3-hydroxy-2-oxo-4-phosphooxybutanoate + NADH + H(+). The protein operates within cofactor biosynthesis; pyridoxine 5'-phosphate biosynthesis; pyridoxine 5'-phosphate from D-erythrose 4-phosphate: step 2/5. In terms of biological role, catalyzes the oxidation of erythronate-4-phosphate to 3-hydroxy-2-oxo-4-phosphonooxybutanoate. The protein is Erythronate-4-phosphate dehydrogenase of Bacteroides fragilis (strain YCH46).